The primary structure comprises 179 residues: Interleukin-22b (179 aa).

An N-terminal signal peptide occupies residues 1 to 33 (MAVLQKSMSFSLMGTLAASCLLLIALWAQEANA). Disulfide bonds link Cys40-Cys132 and Cys89-Cys178. N-linked (GlcNAc...) asparagine glycosylation is found at Asn54, Asn68, and Asn97.

The protein belongs to the IL-10 family.

The protein resides in the secreted. Its function is as follows. Cytokine that contributes to the inflammatory response in vivo. The protein is Interleukin-22b of Mus musculus (Mouse).